The following is a 368-amino-acid chain: N-acetylneuraminate epimerase (368 aa).

An N-terminal signal peptide occupies residues 1-19 (MNKTIMALAIMMASFAANA). Kelch repeat units follow at residues 40–84 (TVYI…AFID), 86–137 (NLYV…FVHN), 139–173 (KAYVTGGVNQNIFNGYFEDLNEAGKDSTAIDKINA), 174–219 (HYFD…VNKG), 222–265 (TWLI…VAGG), 287–336 (ENYQ…PWNN), and 338–367 (LLIIGGETAGGKAVTDSVLISVKDNKVTVQ). Glu228 (proton acceptor) is an active-site residue.

Belongs to the NanM family. In terms of assembly, homodimer.

The protein resides in the periplasm. The enzyme catalyses N-acetyl-alpha-neuraminate = N-acetyl-beta-neuraminate. Functionally, converts alpha-N-acetylneuranimic acid (Neu5Ac) to the beta-anomer, accelerating the equilibrium between the alpha- and beta-anomers. Probably facilitates sialidase-negative bacteria to compete successfully for limited amounts of extracellular Neu5Ac, which is likely taken up in the beta-anomer. In addition, the rapid removal of sialic acid from solution might be advantageous to the bacterium to damp down host responses. The protein is N-acetylneuraminate epimerase of Shigella sonnei (strain Ss046).